A 108-amino-acid polypeptide reads, in one-letter code: Virulence-associated protein I (108 aa).

The HTH cro/C1-type domain maps to 19 to 74 (LREEYLKPMGLSAHALAKALHVSPSRINEIVREQRGITADTALRLVRYFGGDAQSW). The H-T-H motif DNA-binding region spans 30 to 49 (SAHALAKALHVSPSRINEIV).

Belongs to the VapA/VapI family.

This is Virulence-associated protein I (vapI) from Dichelobacter nodosus (Bacteroides nodosus).